Reading from the N-terminus, the 636-residue chain is Protein SOSEKI 2 (636 aa).

The segment at 9-103 (HKIEVIYLLS…YVLKALEVMD (95 aa)) is DIX-like oligomerization domain. 4 disordered regions span residues 164-188 (VHNN…SRVP), 281-304 (HGRL…TVDI), 340-393 (VEGS…TSAK), and 499-524 (LGSG…VSRP). Composition is skewed to polar residues over residues 375–390 (SSKS…TYET) and 499–510 (LGSGQASESFSP).

It belongs to the SOSEKI family. In terms of assembly, homodimer. Forms long polymer filaments with other SOKs proteins polymers crucial for polar localization and biological activity.

It is found in the cell membrane. SOSEKI proteins locally interpret global polarity cues and can influence cell division orientation to coordinate cell polarization relative to body axes. The sequence is that of Protein SOSEKI 2 from Physcomitrium patens (Spreading-leaved earth moss).